Consider the following 375-residue polypeptide: Chaperone protein DnaJ (375 aa).

Residues 5–70 (DYYEVLGVAR…NKRRAYDAHG (66 aa)) enclose the J domain. The segment at 131–208 (GIERRIEIPT…CHGAGRVEED (78 aa)) adopts a CR-type zinc-finger fold. Residues C144, C147, C160, C163, C182, C185, C196, and C199 each contribute to the Zn(2+) site. 4 CXXCXGXG motif repeats span residues 144–151 (CAPCHGSG), 160–167 (CGTCHGRG), 182–189 (CPHCDGRG), and 196–203 (CKTCHGAG).

This sequence belongs to the DnaJ family. Homodimer. Zn(2+) is required as a cofactor.

The protein resides in the cytoplasm. Its function is as follows. Participates actively in the response to hyperosmotic and heat shock by preventing the aggregation of stress-denatured proteins and by disaggregating proteins, also in an autonomous, DnaK-independent fashion. Unfolded proteins bind initially to DnaJ; upon interaction with the DnaJ-bound protein, DnaK hydrolyzes its bound ATP, resulting in the formation of a stable complex. GrpE releases ADP from DnaK; ATP binding to DnaK triggers the release of the substrate protein, thus completing the reaction cycle. Several rounds of ATP-dependent interactions between DnaJ, DnaK and GrpE are required for fully efficient folding. Also involved, together with DnaK and GrpE, in the DNA replication of plasmids through activation of initiation proteins. In Xanthomonas euvesicatoria pv. vesicatoria (strain 85-10) (Xanthomonas campestris pv. vesicatoria), this protein is Chaperone protein DnaJ.